The chain runs to 840 residues: E3 ubiquitin-protein ligase RNF19A (840 aa).

The tract at residues 40 to 61 (SDRDLQSSTSSVSLPSVKKAPK) is disordered. Residues 45–56 (QSSTSSVSLPSV) show a composition bias toward low complexity. The TRIAD supradomain stretch occupies residues 128–351 (DFIECPLCLL…LSPSGCTFWG (224 aa)). The Zn(2+) site is built by Cys132, Cys135, Cys150, His152, Cys155, Cys158, Cys176, Cys179, Cys219, Cys224, Cys241, Cys246, Cys251, Cys254, His259, Cys264, Cys301, and Cys304. Residues 132 to 179 (CPLCLLRHSKDRFPDIMTCHHRSCVDCLRQYLRIEISESRVNISCPEC) form an RING-type 1 zinc finger. An IBR-type zinc finger spans residues 199–264 (EKYEEFMLRR…KQIWHPNQTC (66 aa)). The RING-type 2; atypical zinc finger occupies 301-332 (CPRCAAYIIKMNDGSCNHMTCAVCGCEFCWLC). Cys316 is an active-site residue. Residues Cys321, Cys324, Cys329, Cys332, His340, and Cys347 each coordinate Zn(2+). Helical transmembrane passes span 368 to 388 (LVGAPVGIALIAGIAIPAMII) and 424 to 444 (VIVSPVVAAVTVGIGVPIMLA). Disordered regions lie at residues 625–685 (FKFR…GNMK), 700–721 (QQSTNSSEFEAPSLSDSMPSVA), and 786–808 (CSDVPQPSHAADEHGTSRSGGKP). Position 631 is a phosphoserine (Ser631). The tract at residues 660-840 (ATKWSKEATG…DLKVAVQTEI (181 aa)) is interaction with CASR. Residues 671-683 (KKSKSGKLRKKGN) show a composition bias toward basic residues. Over residues 700-717 (QQSTNSSEFEAPSLSDSM) the composition is skewed to polar residues.

Belongs to the RBR family. RNF19 subfamily. As to quaternary structure, interacts with UBE2L3 and UBE2L6. Also interacts with transcription factor Sp1. Interacts with SNCAIP and CASR. Interacts with VCP.

The protein localises to the membrane. It localises to the cytoplasm. It is found in the cytoskeleton. The protein resides in the microtubule organizing center. Its subcellular location is the centrosome. The enzyme catalyses [E2 ubiquitin-conjugating enzyme]-S-ubiquitinyl-L-cysteine + [acceptor protein]-L-lysine = [E2 ubiquitin-conjugating enzyme]-L-cysteine + [acceptor protein]-N(6)-ubiquitinyl-L-lysine.. It participates in protein modification; protein ubiquitination. E3 ubiquitin-protein ligase which accepts ubiquitin from E2 ubiquitin-conjugating enzymes UBE2L3 and UBE2L6 in the form of a thioester and then directly transfers the ubiquitin to targeted substrates, such as SNCAIP or CASR. The chain is E3 ubiquitin-protein ligase RNF19A (Rnf19a) from Mus musculus (Mouse).